A 128-amino-acid polypeptide reads, in one-letter code: Sm-like protein LSM1A (128 aa).

Residues 10 to 85 (FFSTSLAAYL…VVLIGELDVE (76 aa)) enclose the Sm domain.

This sequence belongs to the snRNP Sm proteins family. In terms of assembly, component of the heptameric LSM1-LSM7 complex that forms a seven-membered ring structure with a donut shape. The LSM subunits are arranged in the order LSM1, LSM2, LSM3, LSM6, LSM5, LSM7 and LSM4. LSM1A subunit interacts only with its two neighboring subunits, LSM2 and LSM4. In terms of tissue distribution, expressed in roots, leaves, stems, flowers and siliques.

The protein resides in the cytoplasm. The protein localises to the P-body. Component of the cytoplasmic LSM1-LSM7 complex which is involved in mRNA degradation by promoting decapping and leading to accurate 5'-3' mRNA decay. LSM1A and LSM1B are essential for the formation of the cytoplasmic LSM1-LSM7 complex which regulates developmental gene expression by the decapping of specific development-related transcripts. Required for P-body formation during heat stress. This is Sm-like protein LSM1A from Arabidopsis thaliana (Mouse-ear cress).